We begin with the raw amino-acid sequence, 572 residues long: Glutamate--tRNA ligase (572 aa).

A 'HIGH' region motif is present at residues 107–117 (PNPDGAFHLGN).

This sequence belongs to the class-I aminoacyl-tRNA synthetase family. Glutamate--tRNA ligase type 2 subfamily.

The protein resides in the cytoplasm. It catalyses the reaction tRNA(Glu) + L-glutamate + ATP = L-glutamyl-tRNA(Glu) + AMP + diphosphate. In terms of biological role, catalyzes the attachment of glutamate to tRNA(Glu) in a two-step reaction: glutamate is first activated by ATP to form Glu-AMP and then transferred to the acceptor end of tRNA(Glu). This is Glutamate--tRNA ligase from Pyrococcus furiosus (strain ATCC 43587 / DSM 3638 / JCM 8422 / Vc1).